The sequence spans 138 residues: Thyrotropin subunit beta (138 aa).

The N-terminal stretch at 1-20 (MNAVVLFSVLFALACGQVSS) is a signal peptide. 6 disulfide bridges follow: C22/C72, C36/C87, C39/C125, C47/C103, C51/C105, and C108/C115. Residue N43 is glycosylated (N-linked (GlcNAc...) asparagine). Positions 133 to 138 (LGGFSG) are excised as a propeptide.

It belongs to the glycoprotein hormones subunit beta family. Heterodimer of a common alpha chain and a unique beta chain which confers biological specificity to thyrotropin, lutropin, follitropin and gonadotropin.

It localises to the secreted. Indispensable for the control of thyroid structure and metabolism. This chain is Thyrotropin subunit beta (Tshb), found in Rattus norvegicus (Rat).